A 363-amino-acid chain; its full sequence is Probable L-tyrosine/L-aspartate decarboxylase (363 aa).

At K224 the chain carries N6-(pyridoxal phosphate)lysine.

This sequence belongs to the group II decarboxylase family. MfnA subfamily. The cofactor is pyridoxal 5'-phosphate.

The enzyme catalyses L-tyrosine + H(+) = tyramine + CO2. It carries out the reaction L-aspartate + H(+) = beta-alanine + CO2. The protein operates within cofactor biosynthesis; methanofuran biosynthesis. It participates in cofactor biosynthesis; coenzyme A biosynthesis. Functionally, catalyzes the decarboxylation of L-tyrosine to produce tyramine for methanofuran biosynthesis. Can also catalyze the decarboxylation of L-aspartate to produce beta-alanine for coenzyme A (CoA) biosynthesis. The chain is Probable L-tyrosine/L-aspartate decarboxylase from Methanosphaerula palustris (strain ATCC BAA-1556 / DSM 19958 / E1-9c).